Consider the following 402-residue polypeptide: Tyrosine-protein kinase transforming protein ros (402 aa).

The 280-residue stretch at 98-377 (LNLHKLLGSG…KLQEIRHSPL (280 aa)) folds into the Protein kinase domain. Residues 104–112 (LGSGAFGEV) and lysine 133 each bind ATP. Aspartate 232 functions as the Proton acceptor in the catalytic mechanism. Position 268 is a phosphotyrosine; by autocatalysis (tyrosine 268).

The protein belongs to the protein kinase superfamily. Tyr protein kinase family. Insulin receptor subfamily.

The enzyme catalyses L-tyrosyl-[protein] + ATP = O-phospho-L-tyrosyl-[protein] + ADP + H(+). This Galliformes (UR2SV) protein is Tyrosine-protein kinase transforming protein ros (V-ROS).